Consider the following 595-residue polypeptide: MLKPGDPGGSAFLKVDPAYLQHWQQLFPHGGAGPLKGSGAAGLLSAPQPLQPPPPPPPPERAEPPPDSLRPRPASLSSASSTPASSSTSASSASSCAAAAAAAALAGLSALPVSQLPVFAPLAAAAVAAEPLPPKELCLGATSGPGPVKCGGGGGGGGEGRGAPRFRCSAEELDYYLYGQQRMEIIPLNQHTSDPNNRCDMCADNRNGECPMHGPLHSLRRLVGTSSAAAAAPPPELPEWLRDLPREVCLCTSTVPGLAYGICAAQRIQQGTWIGPFQGVLLPPEKVQAGAVRNTQHLWEIYDQDGTLQHFIDGGEPSKSSWMRYIRCARHCGEQNLTVVQYRSNIFYRACIDIPRGTELLVWYNDSYTSFFGIPLQCIAQDENLNVPSTVMEAMCRQDALQPFNKSSKLAPTTQQRSVVFPQTPCSRNFSLLDKSGPIESGFNQINVKNQRVLASPTSTSQLHSEFSDWHLWKCGQCFKTFTQRILLQMHVCTQNPDRPYQCGHCSQSFSQPSELRNHVVTHSSDRPFKCGYCGRAFAGATTLNNHIRTHTGEKPFKCERCERSFTQATQLSRHQRMPNECKPITESPESIEVD.

The disordered stretch occupies residues 27–90 (FPHGGAGPLK…STPASSSTSA (64 aa)). Residues 30-40 (GGAGPLKGSGA) are compositionally biased toward gly residues. The segment covering 49 to 59 (PLQPPPPPPPP) has biased composition (pro residues). Residues 71–90 (PRPASLSSASSTPASSSTSA) are compositionally biased toward low complexity. Residues 246–365 (REVCLCTSTV…RGTELLVWYN (120 aa)) enclose the SET domain. The segment at 473 to 495 (WKCGQCFKTFTQRILLQMHVCTQ) adopts a C2H2-type 1; degenerate zinc-finger fold. 2 C2H2-type zinc fingers span residues 501-523 (YQCG…VVTH) and 529-551 (FKCG…IRTH). The C2H2-type 4; degenerate zinc finger occupies 557 to 579 (FKCERCERSFTQATQLSRHQRMP).

It belongs to the class V-like SAM-binding methyltransferase superfamily. Interacts with HDAC1, HDAC2, HDAC3, CBX1 and EP300.

Its subcellular location is the nucleus. It carries out the reaction L-lysyl(20)-[histone H4] + S-adenosyl-L-methionine = N(6)-methyl-L-lysyl(20)-[histone H4] + S-adenosyl-L-homocysteine + H(+). Putative histone methyltransferase that acts as a transcriptional repressor of smooth muscle gene expression. Promotes the transition from differentiated to proliferative smooth muscle by suppressing differentiation and maintaining the proliferative potential of vascular smooth muscle cells. Also plays a role in endothelial cells by inhibiting endothelial cell proliferation, survival and differentiation. It is unclear whether it has histone methyltransferase activity in vivo. According to some authors, it does not act as a histone methyltransferase by itself and represses transcription by recruiting EHMT2/G9a. According to others, it possesses histone methyltransferase activity when associated with other proteins and specifically methylates 'Lys-20' of histone H4 in vitro. 'Lys-20' methylation represents a specific tag for epigenetic transcriptional repression. This Homo sapiens (Human) protein is Putative histone-lysine N-methyltransferase PRDM6 (PRDM6).